Reading from the N-terminus, the 448-residue chain is Argininosuccinate synthase (448 aa).

ATP contacts are provided by residues 17–25 (AFSGGLDTS) and A43. Residue Y99 participates in L-citrulline binding. ATP contacts are provided by G129 and T131. L-aspartate-binding residues include T131, N135, and D136. Residue N135 participates in L-citrulline binding. D136 is an ATP binding site. The L-citrulline site is built by R139 and S192. Residue D194 coordinates ATP. T201, E203, and E280 together coordinate L-citrulline.

This sequence belongs to the argininosuccinate synthase family. Type 2 subfamily. In terms of assembly, homotetramer.

It localises to the cytoplasm. The enzyme catalyses L-citrulline + L-aspartate + ATP = 2-(N(omega)-L-arginino)succinate + AMP + diphosphate + H(+). The protein operates within amino-acid biosynthesis; L-arginine biosynthesis; L-arginine from L-ornithine and carbamoyl phosphate: step 2/3. The chain is Argininosuccinate synthase from Pectobacterium carotovorum subsp. carotovorum (strain PC1).